We begin with the raw amino-acid sequence, 380 residues long: Tryptophan--tRNA ligase 2 (380 aa).

Positions 74–82 (PSGPMHLGH) match the 'HIGH' region motif. The 'KMSKS' region motif lies at 249–253 (KMSSS).

It belongs to the class-I aminoacyl-tRNA synthetase family.

Its subcellular location is the cytoplasm. It carries out the reaction tRNA(Trp) + L-tryptophan + ATP = L-tryptophyl-tRNA(Trp) + AMP + diphosphate + H(+). In Halobacterium salinarum (strain ATCC 700922 / JCM 11081 / NRC-1) (Halobacterium halobium), this protein is Tryptophan--tRNA ligase 2.